Here is a 657-residue protein sequence, read N- to C-terminus: Leishmanolysin (657 aa).

The signal sequence occupies residues 1–41 (MSVDSSSSSTHRRRCVAARLVRLAAAGAAVTVAVGTAAAWA). Residues 42 to 102 (HAGALQHRCI…DPRPGSAPTV (61 aa)) constitute a propeptide, activation peptide. Over 44-611 (GALQHRCIHD…DRMVGLATAA (568 aa)) the chain is Extracellular. The N-linked (GlcNAc...) asparagine glycan is linked to Asn-107. Cystine bridges form between Cys-127/Cys-144 and Cys-193/Cys-232. His-266 contacts Zn(2+). The active site involves Glu-267. Residue His-270 participates in Zn(2+) binding. Residue Asn-302 is glycosylated (N-linked (GlcNAc...) asparagine). Intrachain disulfides connect Cys-316-Cys-388, Cys-395-Cys-458, Cys-408-Cys-427, Cys-417-Cys-492, Cys-469-Cys-513, Cys-518-Cys-568, and Cys-538-Cys-561. His-336 is a binding site for Zn(2+). 5 N-linked (GlcNAc...) asparagine glycosylation sites follow: Asn-399, Asn-409, Asn-445, Asn-466, and Asn-501. The chain crosses the membrane as a helical span at residues 612 to 632 (TVLLGMVLSLMALVVVWLLLV). Over 633–657 (SCPWWCCKLGGPPASVTPACSPETE) the chain is Cytoplasmic.

The protein belongs to the peptidase M8 family. Requires Zn(2+) as cofactor.

The protein resides in the membrane. It catalyses the reaction Preference for hydrophobic residues at P1 and P1' and basic residues at P2' and P3'. A model nonapeptide is cleaved at -Ala-Tyr-|-Leu-Lys-Lys-.. In terms of biological role, has an integral role during the infection of macrophages in the mammalian host. This chain is Leishmanolysin (mspC), found in Leishmania tropica.